Reading from the N-terminus, the 38-residue chain is Mu/omega-theraphotoxin-Mb1b (38 aa).

Intrachain disulfides connect Cys-7/Cys-21, Cys-14/Cys-26, and Cys-20/Cys-33. A Serine amide modification is found at Ser-38.

Belongs to the neurotoxin 10 (Hwtx-1) family. 28 (Jztx-11) subfamily. As to expression, expressed by the venom gland.

Its subcellular location is the secreted. In terms of biological role, paralytic toxin on insects that inhibits voltage-gated sodium (Nav) and calcium (Cav) channels in P.americana (American cockroach) dorsal unpaired median (DUM) neurons, and also inhibits the B.germanica (German cockroach) Nav channel (BgNaV1). May act as a gating-modifier toxin on Nav and as a pore blocker on Cav. In vivo, reversibly paralyzes both L.cuprina (Australian sheep blowfly) and M.domestica (housefly), but does not affect larvae of H.armigera (cotton bollworms). The polypeptide is Mu/omega-theraphotoxin-Mb1b (Monocentropus balfouri (Socotra Island blue baboon tarantula)).